Here is a 167-residue protein sequence, read N- to C-terminus: Novel acetylcholine receptor chaperone (167 aa).

The Cytoplasmic segment spans residues 1–5 (MASPR). A helical transmembrane segment spans residues 6-26 (TVTIVALSVALGLFFVFMGTI). Topologically, residues 27-61 (KLTPRLSKDAYSEMKRAYKSYVRALPLLKKMGINS) are lumenal. The interval 43 to 54 (AYKSYVRALPLL) is interaction with NGFR. Residues 62–82 (ILLRKSIGALEVACGIVMTLV) form a helical membrane-spanning segment. Topologically, residues 83–88 (PGRPKD) are cytoplasmic. Residues 89-109 (VANFFLLLLVLAVLFFHQLVG) form a helical membrane-spanning segment. Residues 110–114 (DPLKR) lie on the Lumenal side of the membrane. The helical transmembrane segment at 115 to 132 (YAHALVFGILLTCRLLIA) threads the bilayer. Residues 133–167 (RKPEDRSSEKKPLPGNAEEQPSLYEKAPQGKVKVS) lie on the Cytoplasmic side of the membrane. A disordered region spans residues 136 to 167 (EDRSSEKKPLPGNAEEQPSLYEKAPQGKVKVS).

The protein belongs to the DoxX family. May interact with NGFR. Interacts with RPN1, RPN2 and CANX.

The protein localises to the peroxisome membrane. It is found in the cytoplasmic vesicle. The protein resides in the endoplasmic reticulum membrane. Molecular chaperone which mediates the proper assembly and functional expression of the nicotinic acetylcholine receptors (nAChRs) throughout the brain. Essential for the proper folding, assembly, function and surface trafficking of alpha-7 (CHRNA7), alpha-4-beta-2, alpha-3-beta-2 and alpha-3-beta-4 receptors. Stably associates with ribophorin-1 (RPN1) and ribophorin-2 (RPN2) (components of the oligosaccharyl transferase (OST) complex) and with calnexin (CANX), both of which are critical for NACHO-mediated effects on CHRNA7 assembly and function. Facilitates the proper folding and assembly of alpha-6-beta-2 and alpha-6-beta-2-beta-3 receptors and acts at early stages of the nAChRs subunit assembly. Promotes the expression of the alpha-4(2):beta-2(3) stoichiometric form over the alpha-4(3):beta-2(2) form. The sequence is that of Novel acetylcholine receptor chaperone (TMEM35A) from Macaca fascicularis (Crab-eating macaque).